A 392-amino-acid polypeptide reads, in one-letter code: HORMA domain-containing protein 1 (392 aa).

In terms of domain architecture, HORMA spans 25-227 (HQSLMFVKRL…TPFHTFRLKV (203 aa)). Residues 323-359 (SELDVSESKTRSGKIFQSKMVNGNNQQGQTSKENRKR) are disordered. Over residues 341-353 (KMVNGNNQQGQTS) the composition is skewed to polar residues. Ser375 bears the Phosphoserine mark. Positions 381–384 (KKRR) match the Nuclear localization signal motif.

Interacts with HORMAD2. Interacts with IHO1. Post-translationally, phosphorylated at Ser-375 in a SPO11-dependent manner. Specifically expressed in meiotic germ cells.

The protein localises to the nucleus. It is found in the chromosome. The protein resides in the cytoplasm. Plays a key role in meiotic progression. Regulates 3 different functions during meiosis: ensures that sufficient numbers of processed DNA double-strand breaks (DSBs) are available for successful homology search by increasing the steady-state numbers of single-stranded DSB ends. Promotes synaptonemal-complex formation independently of its role in homology search. Plays a key role in the male mid-pachytene checkpoint and the female meiotic prophase checkpoint: required for efficient build-up of ATR activity on unsynapsed chromosome regions, a process believed to form the basis of meiotic silencing of unsynapsed chromatin (MSUC) and meiotic prophase quality control in both sexes. This is HORMA domain-containing protein 1 from Mus musculus (Mouse).